The primary structure comprises 578 residues: Zinc finger protein 248 (578 aa).

Residues Val8–Pro78 enclose the KRAB domain. Residues Thr239–His263 form a C2H2-type 1; degenerate zinc finger. A Glycyl lysine isopeptide (Lys-Gly) (interchain with G-Cter in SUMO2) cross-link involves residue Lys340. C2H2-type zinc fingers lie at residues Phe379–His401, Tyr407–His429, Tyr435–His457, Tyr463–His485, Phe491–His513, Tyr519–Thr542, and Tyr547–His569.

It belongs to the krueppel C2H2-type zinc-finger protein family.

It localises to the nucleus. May be involved in transcriptional regulation. This Pongo abelii (Sumatran orangutan) protein is Zinc finger protein 248 (ZNF248).